The following is a 235-amino-acid chain: LexA repressor (235 aa).

A DNA-binding region (H-T-H motif) is located at residues 47-67 (IREIADAVGLTSTSSVAHQLR). Active-site for autocatalytic cleavage activity residues include Ser159 and Lys196.

This sequence belongs to the peptidase S24 family. As to quaternary structure, homodimer.

The catalysed reaction is Hydrolysis of Ala-|-Gly bond in repressor LexA.. In terms of biological role, represses a number of genes involved in the response to DNA damage (SOS response), including recA and lexA. In the presence of single-stranded DNA, RecA interacts with LexA causing an autocatalytic cleavage which disrupts the DNA-binding part of LexA, leading to derepression of the SOS regulon and eventually DNA repair. The protein is LexA repressor of Mycobacterium leprae (strain Br4923).